Here is a 481-residue protein sequence, read N- to C-terminus: Protein FAM83E (481 aa).

The DUF1669 stretch occupies residues 1–296; it reads MAASQLAALE…LYAASRPLSA (296 aa). Residues 351–481 form a disordered region; that stretch reads KQETPTTTGP…ASGSGSGRRR (131 aa). Residues 371–385 show a composition bias toward low complexity; sequence RTRTTSGPPTRPSRS. Composition is skewed to polar residues over residues 391–400 and 465–474; these read RLSQLSGSSD and NATTSDWASG.

This sequence belongs to the FAM83 family. As to quaternary structure, directly interacts (via DUF1669) with CSNK1A1, CSNK1A1L, CSNK1D and CSNK1E. May interact with RAF1.

Its subcellular location is the cytoplasm. It is found in the perinuclear region. May play a role in MAPK signaling. The chain is Protein FAM83E from Mus musculus (Mouse).